The sequence spans 429 residues: Glutamate-1-semialdehyde 2,1-aminomutase 2 (429 aa).

Lys268 is subject to N6-(pyridoxal phosphate)lysine.

Belongs to the class-III pyridoxal-phosphate-dependent aminotransferase family. HemL subfamily. As to quaternary structure, homodimer. The cofactor is pyridoxal 5'-phosphate.

It localises to the cytoplasm. It carries out the reaction (S)-4-amino-5-oxopentanoate = 5-aminolevulinate. It functions in the pathway porphyrin-containing compound metabolism; protoporphyrin-IX biosynthesis; 5-aminolevulinate from L-glutamyl-tRNA(Glu): step 2/2. This is Glutamate-1-semialdehyde 2,1-aminomutase 2 from Halalkalibacterium halodurans (strain ATCC BAA-125 / DSM 18197 / FERM 7344 / JCM 9153 / C-125) (Bacillus halodurans).